The primary structure comprises 404 residues: Probable tRNA sulfurtransferase (404 aa).

The 106-residue stretch at Glu61–Glu166 folds into the THUMP domain. ATP is bound by residues Leu184–Leu185, His209–Phe210, Arg266, Gly288, and Gln297.

The protein belongs to the ThiI family.

The protein resides in the cytoplasm. It carries out the reaction [ThiI sulfur-carrier protein]-S-sulfanyl-L-cysteine + a uridine in tRNA + 2 reduced [2Fe-2S]-[ferredoxin] + ATP + H(+) = [ThiI sulfur-carrier protein]-L-cysteine + a 4-thiouridine in tRNA + 2 oxidized [2Fe-2S]-[ferredoxin] + AMP + diphosphate. It catalyses the reaction [ThiS sulfur-carrier protein]-C-terminal Gly-Gly-AMP + S-sulfanyl-L-cysteinyl-[cysteine desulfurase] + AH2 = [ThiS sulfur-carrier protein]-C-terminal-Gly-aminoethanethioate + L-cysteinyl-[cysteine desulfurase] + A + AMP + 2 H(+). Its pathway is cofactor biosynthesis; thiamine diphosphate biosynthesis. Catalyzes the ATP-dependent transfer of a sulfur to tRNA to produce 4-thiouridine in position 8 of tRNAs, which functions as a near-UV photosensor. Also catalyzes the transfer of sulfur to the sulfur carrier protein ThiS, forming ThiS-thiocarboxylate. This is a step in the synthesis of thiazole, in the thiamine biosynthesis pathway. The sulfur is donated as persulfide by IscS. The chain is Probable tRNA sulfurtransferase from Bacillus cereus (strain AH820).